The primary structure comprises 337 residues: Ferredoxin--NADP reductase (337 aa).

The FAD site is built by D35, Q43, Y48, A88, F122, D289, and T330.

This sequence belongs to the ferredoxin--NADP reductase type 2 family. In terms of assembly, homodimer. The cofactor is FAD.

It catalyses the reaction 2 reduced [2Fe-2S]-[ferredoxin] + NADP(+) + H(+) = 2 oxidized [2Fe-2S]-[ferredoxin] + NADPH. This chain is Ferredoxin--NADP reductase, found in Ehrlichia ruminantium (strain Welgevonden).